The primary structure comprises 198 residues: Recombination protein RecR (198 aa).

A C4-type zinc finger spans residues 56–71 (CTTCGNIDTHDPCAIC). The region spanning 79-174 (RSLCVVEEVS…RLTQLAHGLP (96 aa)) is the Toprim domain.

The protein belongs to the RecR family.

May play a role in DNA repair. It seems to be involved in an RecBC-independent recombinational process of DNA repair. It may act with RecF and RecO. The polypeptide is Recombination protein RecR (Sphingopyxis alaskensis (strain DSM 13593 / LMG 18877 / RB2256) (Sphingomonas alaskensis)).